Here is a 460-residue protein sequence, read N- to C-terminus: GTPase Der (460 aa).

EngA-type G domains lie at Lys-9–Gln-171 and Ile-199–Ser-370. GTP contacts are provided by residues Gly-15–Ser-22, Asp-62–Met-66, Asn-123–Asp-126, Gly-205–Ser-212, Asp-252–Ile-256, and Asn-316–Asp-319. Positions Arg-371 to Lys-455 constitute a KH-like domain.

Belongs to the TRAFAC class TrmE-Era-EngA-EngB-Septin-like GTPase superfamily. EngA (Der) GTPase family. In terms of assembly, associates with the 50S ribosomal subunit.

Its function is as follows. GTPase that plays an essential role in the late steps of ribosome biogenesis. In Helicobacter pylori (strain G27), this protein is GTPase Der.